Reading from the N-terminus, the 64-residue chain is Large ribosomal subunit protein bL35 (64 aa).

Positions 1 to 10 (MPKMKTNSAA) are enriched in polar residues. The segment at 1–64 (MPKMKTNSAA…SKNMKKLLGR (64 aa)) is disordered.

This sequence belongs to the bacterial ribosomal protein bL35 family.

The sequence is that of Large ribosomal subunit protein bL35 from Bifidobacterium adolescentis (strain ATCC 15703 / DSM 20083 / NCTC 11814 / E194a).